Consider the following 593-residue polypeptide: UvrABC system protein C (593 aa).

Residues 17–94 enclose the GIY-YIG domain; that stretch reads MEPGCYLMKD…IKQYQPRYNI (78 aa). Residues 199-234 form the UVR domain; sequence KTILKSLEERMLTASESLDFERAKEYRDLIQHIQNL.

The protein belongs to the UvrC family. Interacts with UvrB in an incision complex.

The protein localises to the cytoplasm. Its function is as follows. The UvrABC repair system catalyzes the recognition and processing of DNA lesions. UvrC both incises the 5' and 3' sides of the lesion. The N-terminal half is responsible for the 3' incision and the C-terminal half is responsible for the 5' incision. In Staphylococcus aureus (strain USA300), this protein is UvrABC system protein C.